The sequence spans 970 residues: Insulin-degrading enzyme-like 1, peroxisomal (970 aa).

Histidine 69 provides a ligand contact to Zn(2+). Glutamate 72 (proton acceptor) is an active-site residue. Histidine 73 contributes to the Zn(2+) binding site. The active site involves glutamate 143. Glutamate 150 is a Zn(2+) binding site.

The protein belongs to the peptidase M16 family. Zn(2+) is required as a cofactor.

The protein resides in the peroxisome. In terms of biological role, peptidase that might be involved in pathogen or wound response. Not required for peroxisome biogenesis, indole-3-butyric acid (IBA) metabolism, fatty acid beta-oxidation or degradation of glyoxylate cycle enzymes during seedling development. The protein is Insulin-degrading enzyme-like 1, peroxisomal (PXM16) of Arabidopsis thaliana (Mouse-ear cress).